Consider the following 660-residue polypeptide: Solute carrier family 5 member 4 (660 aa).

Residues 1–28 (MASTLSPSTVTKTPGPPEISERIQNAAD) lie on the Cytoplasmic side of the membrane. Residues 29–47 (ISVIVIYFVVVMAVGLWAM) traverse the membrane as a helical segment. Residues 48-64 (LRTNRGTVGGFFLAGRD) lie on the Extracellular side of the membrane. A helical transmembrane segment spans residues 65 to 85 (VTWWPMGASLFASNIGSGHFV). Residues 86–105 (GLAGTGAASGIAIAAFEWNA) are Cytoplasmic-facing. A helical membrane pass occupies residues 106 to 126 (LLLLLVLGWFFVPIYIKAGVM). The Extracellular segment spans residues 127-171 (TMPEYLRKRFGGKRLQIYLSILSLFICVALRISSDIFSGAIFIKL). The chain crosses the membrane as a helical span at residues 172 to 191 (ALGLDLYLAIFSLLAITAIY). The Cytoplasmic segment spans residues 192 to 208 (TITGGLASVIYTDTLQT). Residues 209 to 229 (IIMLIGSFILMGFAFVEVGGY) traverse the membrane as a helical segment. Residues 230-270 (ESFTEKYMNAIPTIVEGDNLTISPKCYTPQGDSFHIFRDAV) are Extracellular-facing. Residue asparagine 248 is glycosylated (N-linked (GlcNAc...) asparagine). The helical transmembrane segment at 271–291 (TGDIPWPGMIFGMTVVAAWYW) threads the bilayer. At 292 to 314 (CTDQVIVQRCLSGKDMSHVKAAC) the chain is on the cytoplasmic side. A helical transmembrane segment spans residues 315–334 (IMCGYLKLLPMFLMVMPGMI). Residues 335–423 (SRILYTEKVA…RKQASEKELL (89 aa)) lie on the Extracellular side of the membrane. Residues 424 to 443 (IAGRLFIILLIVISIVWVPL) form a helical membrane-spanning segment. Topologically, residues 444-455 (VQVAQNGQLFHY) are cytoplasmic. The helical transmembrane segment at 456-476 (IESISSYLGPPIAAVFLLAIF) threads the bilayer. Topologically, residues 477-526 (CKRVNEQGAFWGLIIGFVMGLIRMIAEFVYGTGSCLAASNCPQIICGVHY) are extracellular. The helical transmembrane segment at 527 to 547 (LYFALILFFVSILVVLAISLL) threads the bilayer. Residues 548 to 638 (TKPIPDVHLY…TDTSEKPLWK (91 aa)) lie on the Cytoplasmic side of the membrane. A helical membrane pass occupies residues 639–659 (TIVNINAILLLAVAVFVHGYF).

It belongs to the sodium:solute symporter (SSF) (TC 2.A.21) family. As to expression, kidney, intestine, liver, skeletal muscle and spleen.

The protein localises to the cell membrane. The catalysed reaction is D-glucose(out) + 2 Na(+)(out) = D-glucose(in) + 2 Na(+)(in). Its activity is regulated as follows. Inhibited by phlorizin. In terms of biological role, low-affinity sodium/D-glucose symporter with a great selectivity for sugars (D-glucose &gt;&gt; D-galactose). Na(+) and D-glucose transport are tightly coupled at neutral pH, but at acidic pH, ion transport is uncoupled from sugar transport. The sequence is that of Solute carrier family 5 member 4 from Sus scrofa (Pig).